The chain runs to 367 residues: UDP-N-acetylglucosamine--N-acetylmuramyl-(pentapeptide) pyrophosphoryl-undecaprenol N-acetylglucosamine transferase (367 aa).

Residues 11–13 (TAG), N125, R163, S197, and Q289 each bind UDP-N-acetyl-alpha-D-glucosamine.

Belongs to the glycosyltransferase 28 family. MurG subfamily.

The protein localises to the cell membrane. It carries out the reaction di-trans,octa-cis-undecaprenyl diphospho-N-acetyl-alpha-D-muramoyl-L-alanyl-D-glutamyl-meso-2,6-diaminopimeloyl-D-alanyl-D-alanine + UDP-N-acetyl-alpha-D-glucosamine = di-trans,octa-cis-undecaprenyl diphospho-[N-acetyl-alpha-D-glucosaminyl-(1-&gt;4)]-N-acetyl-alpha-D-muramoyl-L-alanyl-D-glutamyl-meso-2,6-diaminopimeloyl-D-alanyl-D-alanine + UDP + H(+). The protein operates within cell wall biogenesis; peptidoglycan biosynthesis. Its function is as follows. Cell wall formation. Catalyzes the transfer of a GlcNAc subunit on undecaprenyl-pyrophosphoryl-MurNAc-pentapeptide (lipid intermediate I) to form undecaprenyl-pyrophosphoryl-MurNAc-(pentapeptide)GlcNAc (lipid intermediate II). This is UDP-N-acetylglucosamine--N-acetylmuramyl-(pentapeptide) pyrophosphoryl-undecaprenol N-acetylglucosamine transferase from Clavibacter sepedonicus (Clavibacter michiganensis subsp. sepedonicus).